We begin with the raw amino-acid sequence, 396 residues long: S-adenosylmethionine synthase (396 aa).

Mg(2+) is bound at residue Glu-12. His-18 contacts ATP. Glu-46 serves as a coordination point for K(+). Residues Glu-59 and Gln-102 each contribute to the L-methionine site. Residues 170–172 (DGK), 238–241 (SGRF), Asp-249, 255–256 (RK), Ala-272, Lys-276, and Lys-280 each bind ATP. Residue Asp-249 coordinates L-methionine. Lys-280 is an L-methionine binding site.

The protein belongs to the AdoMet synthase family. Homotetramer. It depends on Mn(2+) as a cofactor. The cofactor is Mg(2+). Co(2+) is required as a cofactor. K(+) serves as cofactor.

The protein localises to the cytoplasm. The catalysed reaction is L-methionine + ATP + H2O = S-adenosyl-L-methionine + phosphate + diphosphate. The protein operates within amino-acid biosynthesis; S-adenosyl-L-methionine biosynthesis; S-adenosyl-L-methionine from L-methionine: step 1/1. In terms of biological role, catalyzes the formation of S-adenosylmethionine from methionine and ATP. The reaction comprises two steps that are both catalyzed by the same enzyme: formation of S-adenosylmethionine (AdoMet) and triphosphate, and subsequent hydrolysis of the triphosphate. This chain is S-adenosylmethionine synthase (SAMS), found in Triticum aestivum (Wheat).